The primary structure comprises 362 residues: Phosphoserine aminotransferase (362 aa).

An L-glutamate-binding site is contributed by Arg41. Residues 75–76, Phe101, Thr152, Asp173, and Gln196 each bind pyridoxal 5'-phosphate; that span reads GS. N6-(pyridoxal phosphate)lysine is present on Lys197. 239-240 contributes to the pyridoxal 5'-phosphate binding site; the sequence is NT.

Belongs to the class-V pyridoxal-phosphate-dependent aminotransferase family. SerC subfamily. In terms of assembly, homodimer. The cofactor is pyridoxal 5'-phosphate.

It is found in the cytoplasm. It catalyses the reaction O-phospho-L-serine + 2-oxoglutarate = 3-phosphooxypyruvate + L-glutamate. It carries out the reaction 4-(phosphooxy)-L-threonine + 2-oxoglutarate = (R)-3-hydroxy-2-oxo-4-phosphooxybutanoate + L-glutamate. It participates in amino-acid biosynthesis; L-serine biosynthesis; L-serine from 3-phospho-D-glycerate: step 2/3. Its function is as follows. Catalyzes the reversible conversion of 3-phosphohydroxypyruvate to phosphoserine and of 3-hydroxy-2-oxo-4-phosphonooxybutanoate to phosphohydroxythreonine. The protein is Phosphoserine aminotransferase of Leuconostoc mesenteroides subsp. mesenteroides (strain ATCC 8293 / DSM 20343 / BCRC 11652 / CCM 1803 / JCM 6124 / NCDO 523 / NBRC 100496 / NCIMB 8023 / NCTC 12954 / NRRL B-1118 / 37Y).